Consider the following 504-residue polypeptide: Flavin-dependent halogenase armH3 (504 aa).

Positions 16, 19, 49, and 149 each coordinate FAD. Residues Ser-329 and Gly-330 each contribute to the chloride site. An FAD-binding site is contributed by Ile-331. Residues 444–475 form a disordered region; the sequence is NNLRTPVDTGAADVKAKHAPSETDAQNPLQSM.

This sequence belongs to the flavin-dependent halogenase family.

The enzyme catalyses melleolide F + FADH2 + chloride + O2 = 6'-chloromelleolide F + FAD + 2 H2O + H(+). Functionally, flavin-dependent halogenase involved in the biosynthesis of melleolides, a range of antifungal and phytotoxic polyketide derivatives composed of an orsellinic acid (OA) moiety esterified to various sesquiterpene alcohols. The halogenase catalyzes the transfer of a single chlorine atom to the melleolide backbone, resulting in a 6'-chloromelleolide product. The enzyme acts on free substrate and does not depend on carrier-protein-dependent acceptor molecules. The sequence is that of Flavin-dependent halogenase armH3 from Armillaria mellea (Honey mushroom).